Here is a 388-residue protein sequence, read N- to C-terminus: Amylovoran biosynthesis protein AmsL (388 aa).

6 helical membrane passes run 24–44 (VLLS…ISWF), 47–67 (LPQL…LGSL), 97–117 (FTVI…LGLF), 231–251 (FVIM…SPVI), 297–317 (FYWN…VWIW), and 359–379 (ISVS…NLFI).

This sequence belongs to the polysaccharide synthase family.

Its subcellular location is the cell membrane. It functions in the pathway glycan metabolism; exopolysaccharide biosynthesis. In terms of biological role, involved in the biosynthesis of amylovoran which functions as a virulence factor. The sequence is that of Amylovoran biosynthesis protein AmsL (amsL) from Erwinia amylovora (Fire blight bacteria).